The sequence spans 639 residues: Chaperone protein DnaK (639 aa).

Residue T198 is modified to Phosphothreonine; by autocatalysis. Over residues 603 to 618 (AKAQTQGGAQEGAAKQ) the composition is skewed to low complexity. Positions 603-639 (AKAQTQGGAQEGAAKQSNATADDVVDAEFEEVKDDKK) are disordered. The segment covering 625–639 (DVVDAEFEEVKDDKK) has biased composition (acidic residues).

Belongs to the heat shock protein 70 family.

In terms of biological role, acts as a chaperone. The protein is Chaperone protein DnaK of Shewanella sp. (strain ANA-3).